The sequence spans 201 residues: dITP/XTP pyrophosphatase (201 aa).

T8 to K13 provides a ligand contact to substrate. The Mg(2+) site is built by E41 and D73. D73 serves as the catalytic Proton acceptor. Substrate contacts are provided by residues S74, F154–D157, K177, and H182–R183.

Belongs to the HAM1 NTPase family. Homodimer. It depends on Mg(2+) as a cofactor.

The catalysed reaction is XTP + H2O = XMP + diphosphate + H(+). The enzyme catalyses dITP + H2O = dIMP + diphosphate + H(+). It carries out the reaction ITP + H2O = IMP + diphosphate + H(+). Functionally, pyrophosphatase that catalyzes the hydrolysis of nucleoside triphosphates to their monophosphate derivatives, with a high preference for the non-canonical purine nucleotides XTP (xanthosine triphosphate), dITP (deoxyinosine triphosphate) and ITP. Seems to function as a house-cleaning enzyme that removes non-canonical purine nucleotides from the nucleotide pool, thus preventing their incorporation into DNA/RNA and avoiding chromosomal lesions. This Clostridium tetani (strain Massachusetts / E88) protein is dITP/XTP pyrophosphatase.